Consider the following 360-residue polypeptide: CLIP domain-containing serine protease B4 (360 aa).

The signal sequence occupies residues 1–24; the sequence is MIGNRVINLLIVATLALAGQTVLA. One can recognise a Clip domain in the interval 30 to 83; sequence DCVNPVGEAGKCVLFRECQPLVDIYNKPVNTPDDTQFLTESRCGLYERKTLVCC. 4 cysteine pairs are disulfide-bonded: cysteine 31–cysteine 82, cysteine 41–cysteine 72, cysteine 47–cysteine 83, and cysteine 138–cysteine 154. A Peptidase S1 domain is found at 108–360; sequence VIGGQPTKID…YVDWIKDNIY (253 aa). Active-site charge relay system residues include histidine 153 and aspartate 213. Asparagine 224 carries N-linked (GlcNAc...) asparagine glycosylation. Cystine bridges form between cysteine 280–cysteine 297 and cysteine 307–cysteine 336. Serine 311 acts as the Charge relay system in catalysis.

The protein belongs to the peptidase S1 family. CLIP subfamily. As to quaternary structure, interacts with SRPN2 in the hemolymph of immune-challenged female mosquitoes; the interaction results in CLIPB4 inhibition. As to expression, in females, expressed in fat body, cuticle, thorax and ovaries.

Its subcellular location is the secreted. In terms of biological role, serine protease which plays a role in the innate immune response against protozoan and bacterial pathogens, such as Plasmodium bergei, Staphylococcus aureus, Micrococcus luteus and Escherichia coli, by activating the melanization cascade. Cleaves and activates CLIPB8. In the resistant strain L3-5, involved in the melanization of killed parasite P.berghei ookinetes which results in their clearance. In the susceptible strain G3, appears to be dispensable for ookinete elimination which occurs by lysis. The sequence is that of CLIP domain-containing serine protease B4 from Anopheles gambiae (African malaria mosquito).